We begin with the raw amino-acid sequence, 142 residues long: Hdr-like menaquinol oxidoreductase cytochrome c subunit (142 aa).

Topologically, residues 1–6 are cytoplasmic; that stretch reads MYNKKY. The chain crosses the membrane as a helical span at residues 7 to 27; sequence VIPLILVFLIGFFTPYWYNAM. Residues 28–142 are Extracellular-facing; sequence AGTLGHVPTL…GIEELSKYFS (115 aa). Positions 93, 96, 97, 104, 107, 108, 117, 120, and 121 each coordinate heme.

In terms of assembly, consists of five subunits: an integral membrane subunit, a cytochrome b-like subunit, a cytochrome c subunit and two iron-sulfur subunits. Post-translationally, binds 3 heme groups per subunit.

The protein resides in the cell membrane. Its function is as follows. Has menaquinol-oxidizing activity. HmeA, HmeB and HmeE subunits may together catalyze electron transfer from menaquinol to cytochrome c. This chain is Hdr-like menaquinol oxidoreductase cytochrome c subunit (hmeE), found in Archaeoglobus fulgidus (strain ATCC 49558 / DSM 4304 / JCM 9628 / NBRC 100126 / VC-16).